The following is a 519-amino-acid chain: General transcription factor 3C polypeptide 5 (519 aa).

Ala-2 carries the post-translational modification N-acetylalanine. The disordered stretch occupies residues 465–519 (ALFSSSAKADGGKEQLTYESGEDEEDEEEEEEEEEDFKPSDGSENEMETEILDYV). Acidic residues-rich tracts occupy residues 484–500 (SGED…EEED) and 507–519 (SENE…LDYV).

It belongs to the TFIIIC subunit 5 family. In terms of assembly, part of the TFIIIC subcomplex TFIIIC2, consisting of six subunits, GTF3C1, GTF3C2, GTF3C3, GTF3C4, GTF3C5 and GTF3C6. Interacts with BRF1, GTF3C6 and TBP.

It is found in the nucleus. In terms of biological role, involved in RNA polymerase III-mediated transcription. Integral, tightly associated component of the DNA-binding TFIIIC2 subcomplex that directly binds tRNA and virus-associated RNA promoters. The sequence is that of General transcription factor 3C polypeptide 5 (GTF3C5) from Homo sapiens (Human).